Consider the following 391-residue polypeptide: Mannonate dehydratase (391 aa).

It belongs to the mannonate dehydratase family. It depends on Fe(2+) as a cofactor. Mn(2+) is required as a cofactor.

The enzyme catalyses D-mannonate = 2-dehydro-3-deoxy-D-gluconate + H2O. The protein operates within carbohydrate metabolism; pentose and glucuronate interconversion. Functionally, catalyzes the dehydration of D-mannonate. This chain is Mannonate dehydratase, found in Marinomonas sp. (strain MWYL1).